A 256-amino-acid chain; its full sequence is Floral homeotic protein APETALA 1-1 (256 aa).

One can recognise an MADS-box domain in the interval 1 to 61 (MGRGRVQLKR…GKLFEYSTDS (61 aa)). Residues 88 to 178 (NTNWSMEYNR…SKQIKEREKV (91 aa)) enclose the K-box domain.

Homodimer capable of binding to CArG-box sequences. In terms of tissue distribution, expressed in some of the meristems of arrest-stage broccoli heads.

It is found in the nucleus. Functionally, transcription factor that promotes early floral meristem identity in synergy with LEAFY. Displays a redundant function with CAULIFLOWER in the up-regulation of LEAFY. Required subsequently for the transition of an inflorescence meristem into a floral meristem, and for the normal development of sepals and petals in flowers. Regulates positively B class homeotic proteins. The polypeptide is Floral homeotic protein APETALA 1-1 (1AP1) (Brassica oleracea var. italica (Broccoli)).